Reading from the N-terminus, the 325-residue chain is Basic membrane protein A (325 aa).

A signal peptide spans 1–3; sequence FLS. A lipid anchor (N-palmitoyl cysteine) is attached at cysteine 4. The S-diacylglycerol cysteine moiety is linked to residue cysteine 4.

This sequence belongs to the BMP lipoprotein family. In terms of assembly, monomer.

It is found in the cell inner membrane. Its function is as follows. Immunogenic protein. May be part of an ABC-type nucleoside uptake system involved in the purine salvage pathway. The chain is Basic membrane protein A (bmpA) from Borreliella afzelii (Borrelia afzelii).